Reading from the N-terminus, the 449-residue chain is GTPase Der (449 aa).

EngA-type G domains lie at 3–167 (AVIA…PTSE) and 178–351 (PRIA…IDSR). GTP-binding positions include 9 to 16 (GRPNVGKS), 56 to 60 (DTGGF), 119 to 122 (NKMD), 184 to 191 (GRPNVGKS), 231 to 235 (DTAGM), and 296 to 299 (NKWD). The KH-like domain occupies 352–436 (RHFSTAELNR…PLRLVFRQGE (85 aa)).

It belongs to the TRAFAC class TrmE-Era-EngA-EngB-Septin-like GTPase superfamily. EngA (Der) GTPase family. As to quaternary structure, associates with the 50S ribosomal subunit.

Its function is as follows. GTPase that plays an essential role in the late steps of ribosome biogenesis. The chain is GTPase Der from Acidithiobacillus ferrooxidans (strain ATCC 23270 / DSM 14882 / CIP 104768 / NCIMB 8455) (Ferrobacillus ferrooxidans (strain ATCC 23270)).